A 360-amino-acid chain; its full sequence is Phospho-N-acetylmuramoyl-pentapeptide-transferase (360 aa).

10 consecutive transmembrane segments (helical) span residues 21–41 (YVTFRAILGLMTALMFSLWWG), 74–94 (MGGLLILAGIFISVLLWGDLG), 97–117 (YVWVVLFVLASFGTIGFIDDY), 135–155 (LLQSIAAIVIAVYLYASADTA), 168–188 (VMPQLGAFFIVLVYFTIVGSS), 199–219 (GLAIMPTVMVAAAFALIAYLS), 236–256 (AGELVIVCTAIVGAGLGFLWF), 263–283 (VFMGDVGSLALGAALGAIAVL), 288–308 (ILLVIMGGVFVMETVSVILQV), and 338–358 (VIVRFWIISLFLVLLGLATLK).

Belongs to the glycosyltransferase 4 family. MraY subfamily. Requires Mg(2+) as cofactor.

Its subcellular location is the cell inner membrane. It catalyses the reaction UDP-N-acetyl-alpha-D-muramoyl-L-alanyl-gamma-D-glutamyl-meso-2,6-diaminopimeloyl-D-alanyl-D-alanine + di-trans,octa-cis-undecaprenyl phosphate = di-trans,octa-cis-undecaprenyl diphospho-N-acetyl-alpha-D-muramoyl-L-alanyl-D-glutamyl-meso-2,6-diaminopimeloyl-D-alanyl-D-alanine + UMP. It participates in cell wall biogenesis; peptidoglycan biosynthesis. In terms of biological role, catalyzes the initial step of the lipid cycle reactions in the biosynthesis of the cell wall peptidoglycan: transfers peptidoglycan precursor phospho-MurNAc-pentapeptide from UDP-MurNAc-pentapeptide onto the lipid carrier undecaprenyl phosphate, yielding undecaprenyl-pyrophosphoryl-MurNAc-pentapeptide, known as lipid I. The protein is Phospho-N-acetylmuramoyl-pentapeptide-transferase of Shewanella piezotolerans (strain WP3 / JCM 13877).